Consider the following 133-residue polypeptide: FPRL1 inhibitory protein (133 aa).

The N-terminal stretch at 1–28 (MKKNITKTIIASTVIAAGLLTQTNDAKA) is a signal peptide.

The protein belongs to the CHIPS/FLIPr family.

It localises to the secreted. May be involved in countering the first line of host defense mechanisms. Impairs the leukocyte response to FPRL1 agonists by binding directly to host FPRL1. Exerts, in vitro, anti-inflammatory activity by inhibiting calcium mobilization and cell migration toward chemoattractants. In Staphylococcus aureus (strain Newman), this protein is FPRL1 inhibitory protein (flr).